A 575-amino-acid polypeptide reads, in one-letter code: MNRKYDNNNDKNIPLLSDNERIKKESNFLRGTIAQNLDNNLTGGFNTEDAQLIRFHGMYQQDDRDVRVERANQKLEPLINMMLRCRLPGGVIMPQQWLAIDDFSEKYTLYGTIRLTTRQTFQLHGLLKPNLKNVHRLLNKLGLDSIATAGDVNRNVICTANPMESTLHYQVWELAKSISSYLLPKSNAYAEIWLDSKKTESTDSEPILSATYLPRKFKIAIAIPPINDVDVHANDLSFIAIKSENTDQIIGFNVLVGGGLAMTYGDITTYPRKASAFGYISTKDVLKIAETVVTVQRDWGNRSDRRHAKTKYTLTRVGVTTFKSEVERRSGVQFHPIRPYVFTDRGDRFGWVQGIDDYWHLTLFIENGRISNNDPHKLLKRGIAEVAQIHSGSFRLTANQNLIISGVSKDNKLMIESTLRKYGVINDDITPQRKASMACVAFPTCPLAMAEAERFLPKFVTKIEHIMSKYRLEKDAIILRVTGCPNSCARAMLSEIGLTGRSIGRYNLYLGGNNIGTRIPRLYKENITENDILNILDTTISRWAQERNSQESYGDYVVRSGIVNAVINSEKDFYE.

Residues Cys-439, Cys-445, Cys-484, and Cys-488 each contribute to the [4Fe-4S] cluster site. Cys-488 contacts siroheme.

Belongs to the nitrite and sulfite reductase 4Fe-4S domain family. As to quaternary structure, alpha(8)-beta(8). The alpha component is a flavoprotein, the beta component is a hemoprotein. Siroheme serves as cofactor. The cofactor is [4Fe-4S] cluster.

It carries out the reaction hydrogen sulfide + 3 NADP(+) + 3 H2O = sulfite + 3 NADPH + 4 H(+). The protein operates within sulfur metabolism; hydrogen sulfide biosynthesis; hydrogen sulfide from sulfite (NADPH route): step 1/1. Component of the sulfite reductase complex that catalyzes the 6-electron reduction of sulfite to sulfide. This is one of several activities required for the biosynthesis of L-cysteine from sulfate. The protein is Sulfite reductase [NADPH] hemoprotein beta-component of Blochmanniella pennsylvanica (strain BPEN).